Reading from the N-terminus, the 179-residue chain is DNA utilization protein HofN (179 aa).

A helical transmembrane segment spans residues 19 to 39 (LRFWLLMFVAPLLLAVGITLI).

The protein localises to the cell inner membrane. Functionally, required for the use of extracellular DNA as a nutrient. The sequence is that of DNA utilization protein HofN (hofN) from Escherichia coli (strain K12).